Consider the following 266-residue polypeptide: 4-hydroxy-tetrahydrodipicolinate reductase (266 aa).

10-15 (GPRGRM) contacts NAD(+). Lysine 38 lines the NADP(+) pocket. Residues 99–101 (GTT) and 125–128 (APNF) contribute to the NAD(+) site. Histidine 155 (proton donor/acceptor) is an active-site residue. Histidine 156 contacts (S)-2,3,4,5-tetrahydrodipicolinate. Lysine 159 serves as the catalytic Proton donor. Position 165–166 (165–166 (GT)) interacts with (S)-2,3,4,5-tetrahydrodipicolinate.

This sequence belongs to the DapB family.

The protein resides in the cytoplasm. It carries out the reaction (S)-2,3,4,5-tetrahydrodipicolinate + NAD(+) + H2O = (2S,4S)-4-hydroxy-2,3,4,5-tetrahydrodipicolinate + NADH + H(+). The enzyme catalyses (S)-2,3,4,5-tetrahydrodipicolinate + NADP(+) + H2O = (2S,4S)-4-hydroxy-2,3,4,5-tetrahydrodipicolinate + NADPH + H(+). It participates in amino-acid biosynthesis; L-lysine biosynthesis via DAP pathway; (S)-tetrahydrodipicolinate from L-aspartate: step 4/4. Its function is as follows. Catalyzes the conversion of 4-hydroxy-tetrahydrodipicolinate (HTPA) to tetrahydrodipicolinate. This is 4-hydroxy-tetrahydrodipicolinate reductase from Bacillus mycoides (strain KBAB4) (Bacillus weihenstephanensis).